A 333-amino-acid chain; its full sequence is Nucleoid-associated protein PSPTO_1265 (333 aa).

It belongs to the YejK family.

Its subcellular location is the cytoplasm. It is found in the nucleoid. In Pseudomonas syringae pv. tomato (strain ATCC BAA-871 / DC3000), this protein is Nucleoid-associated protein PSPTO_1265.